The chain runs to 407 residues: MKQQLLERFLSYVSFDTQSDGQNQNVPSTHSQFVFAQHLRQELVSLAFEDVQLSDKGYLTATVPANVEGVPSIGFIAHLDTAPDYSGKNVSPQVIENYNGEDIQLGLAEVLSPKQFSSLNQYIGQTLITTDGTSLLGGDDKAGIAEIISALHHLLTHPEIPHGKIRLCFTPDEEIGRGADHFDVESFGAQWAYTIDGGQVGELEYENFNAATAMITATGNNCHPGTAYGVMVNAQTIAARFHAKMPLKDTPEHSRDYDGFFHLLGMEGVTEKATLTYIIRDFDLELFEKRKQWLTELVEKYNADLSIGQLTIDVQDSYLNMKQQVLPHPHIIDIAKQAMQNLGIEPIIKPIRGGTDGSRLSYMGLPCPNLFTGGHNFHGKHEYVCVESMVKATETIIEIAKLTAEHK.

A Zn(2+)-binding site is contributed by histidine 78. Aspartate 80 is a catalytic residue. Residue aspartate 139 coordinates Zn(2+). The Proton acceptor role is filled by glutamate 173. 3 residues coordinate Zn(2+): glutamate 174, aspartate 196, and histidine 378.

Belongs to the peptidase M20B family. The cofactor is Zn(2+).

The protein localises to the cytoplasm. The enzyme catalyses Release of the N-terminal residue from a tripeptide.. Functionally, cleaves the N-terminal amino acid of tripeptides. This Shewanella pealeana (strain ATCC 700345 / ANG-SQ1) protein is Peptidase T.